Consider the following 469-residue polypeptide: Tubulin gamma-2 chain (469 aa).

142-148 serves as a coordination point for GTP; it reads AGGTGSG.

This sequence belongs to the tubulin family.

The protein resides in the cytoplasm. It is found in the cytoskeleton. It localises to the microtubule organizing center. Tubulin is the major constituent of microtubules. The gamma chain is found at microtubule organizing centers (MTOC) such as the spindle poles, suggesting that it is involved in the minus-end nucleation of microtubule assembly. This is Tubulin gamma-2 chain (TUBG2) from Zea mays (Maize).